The primary structure comprises 62 residues: Kininogen-1 (62 aa).

The signal sequence occupies residues 1–22 (MDILKKSLFLVLFLGLVSFSIC). Residues 24 to 62 (EEKRDTEEEENDDEIEEESEEKKREAPERPPGFTPFRIY) form a disordered region. Acidic residues predominate over residues 30-42 (EEEENDDEIEEES). P54 carries the post-translational modification 4-hydroxyproline; partial. Residue Y62 is modified to Sulfotyrosine.

Belongs to the frog skin active peptide (FSAP) family. Bradykinin-related peptide subfamily. Expressed by the skin glands.

The protein resides in the secreted. Functionally, inhibits ACE with a Ki of 1.6 uM, and targets B2 bradykinin receptor (BDKRB2). Provokes contraction of smooth muscle preparation (ileum). In vivo, induces an early hyperalgesic effects in living rats after intraplantar injection. This Phyllomedusa sauvagei (Sauvage's leaf frog) protein is Kininogen-1.